The sequence spans 649 residues: Solute carrier family 22 member 16 (649 aa).

A helical membrane pass occupies residues 19-39 (FQIVLYLICAYQSLSCGIHYL). Asparagine 65 and asparagine 108 each carry an N-linked (GlcNAc...) asparagine glycan. The next 5 helical transmembrane spans lie at 156–176 (MIQP…SYLS), 190–210 (IGVF…SFMI), 214–234 (FLVM…MEII), 244–264 (IHLN…SYLL), and 268–288 (WLYQ…CWML). N-linked (GlcNAc...) asparagine glycosylation is present at asparagine 315. 6 helical membrane-spanning segments follow: residues 356–376 (AKMT…YYMF), 389–409 (LYLL…CIWL), 417–437 (TMLL…VMPS), 445–465 (MVAL…YLYT), 475–495 (CLAV…IPFT), and 501–521 (VWIF…GLLS). Residues 530–544 (TPMKSTWETTEQQVP) show a composition bias toward polar residues. Disordered stretches follow at residues 530-560 (TPMK…SFER) and 579-649 (SPDA…LGGF).

Belongs to the major facilitator (TC 2.A.1) superfamily. Organic cation transporter (TC 2.A.1.19) family.

It is found in the cell membrane. The catalysed reaction is (R)-carnitine(in) = (R)-carnitine(out). It catalyses the reaction spermidine(in) = spermidine(out). In terms of biological role, facilitative organic cation transporter that mediates the transport of carnitine as well as the polyamine spermidine. Mediates the partially Na(+)-dependent bidirectional transport of carnitine. May mediate L-carnitine secretion from testis epididymal epithelium into the lumen which is involved in the maturation of spermatozoa. The protein is Solute carrier family 22 member 16 of Mus musculus (Mouse).